The sequence spans 140 residues: Small ribosomal subunit protein uS19 (140 aa).

The protein belongs to the universal ribosomal protein uS19 family.

Functionally, protein S19 forms a complex with S13 that binds strongly to the 16S ribosomal RNA. The polypeptide is Small ribosomal subunit protein uS19 (rps19) (Saccharolobus solfataricus (strain ATCC 35092 / DSM 1617 / JCM 11322 / P2) (Sulfolobus solfataricus)).